The primary structure comprises 1155 residues: RhoGEF domain-containing protein gxcJ (1155 aa).

Disordered stretches follow at residues 114 to 216, 259 to 333, 429 to 460, 484 to 508, and 604 to 639; these read ENNS…NFLK, LNKK…IPSN, LVSQ…DSLE, LNNE…TTTT, and SNSN…NNYQ. 3 stretches are compositionally biased toward low complexity: residues 115-153, 161-211, and 260-303; these read NNSI…TNNN, TITN…NNNN, and NKKS…NNNN. A coiled-coil region spans residues 192 to 257; sequence NNNNNNNNNN…KDIEKLNSAL (66 aa). A compositionally biased stretch (polar residues) spans 304–319; that stretch reads YKPTITSSQTQPSLME. A compositionally biased stretch (basic and acidic residues) spans 320-330; that stretch reads NSKDIDKKEKI. The segment covering 441–457 has biased composition (low complexity); the sequence is FLASASSSSTTTITTTD. The span at 604 to 637 shows a compositional bias: low complexity; sequence SNSNSSNNNNSNSNNITNSNSSSFSKKNSNNNNN. The DH domain maps to 700–874; that stretch reads HRTNLIKEIL…EKIVGTINSQ (175 aa). The disordered stretch occupies residues 1084-1155; the sequence is SHRLSIPSTS…LVKSLVNIKT (72 aa). 2 stretches are compositionally biased toward low complexity: residues 1093–1121 and 1128–1137; these read SSPN…GSPN and QQQQLQQQQQ.

Functionally, GTPase-activating protein. This Dictyostelium discoideum (Social amoeba) protein is RhoGEF domain-containing protein gxcJ (gxcJ).